A 143-amino-acid polypeptide reads, in one-letter code: Protein RJ1 (143 aa).

A signal peptide spans 1–26; that stretch reads MARVMTRGMARVSTLATVRVSTLARA.

This is Protein RJ1 (RJ1) from Human herpesvirus 6A (strain Uganda-1102) (HHV-6 variant A).